The primary structure comprises 320 residues: Solute carrier family 35 member B1 (320 aa).

Transmembrane regions (helical) follow at residues 9 to 29 (GLRLLVCFLGVFVCYFYYGIL), 49 to 69 (FALSLVFVQCIVNALFAKLLI), 81 to 103 (QSWLYSACSLSYLGAMVSSNSAL), 134 to 154 (YPLTKYLCVLLIVFGVALFMY), 166 to 186 (TVGYGELLLLLSLTLDGLTGV), 202 to 222 (MMLSINLWSSLFLGAGIVLTG), 241 to 261 (IVLFSLTSALGQTFIFMTVVY), and 283 to 303 (VILFSNPISSIQWVGTLLVFL). A Di-lysine motif motif is present at residues 316 to 320 (KKPSH).

It belongs to the nucleotide-sugar transporter family. SLC35B subfamily.

It is found in the endoplasmic reticulum membrane. Its function is as follows. Probable sugar transporter. The polypeptide is Solute carrier family 35 member B1 (slc35b1) (Xenopus laevis (African clawed frog)).